A 597-amino-acid polypeptide reads, in one-letter code: Kelch-like protein 21 (597 aa).

The BTB domain maps to 35-103; the sequence is LDVTLEAAGG…SYTGRVAVSG (69 aa). Positions 138–239 constitute a BACK domain; sequence CLDMQDFAEA…RRFYLLAHVE (102 aa). Kelch repeat units lie at residues 287–335, 336–382, 384–422, 424–463, 464–512, and 513–560; these read ILVL…ALGN, DIYV…VLDG, LYVV…ACRG, LYAI…SFAP, KTVT…VLGG, and KLYV…SIFR. A disordered region spans residues 570–597; that stretch reads GRGFELDGGSSDMDVGQPRPPQNPAELH. Positions 587–597 are enriched in pro residues; it reads PRPPQNPAELH.

As to quaternary structure, component of the BCR(KLHL21) E3 ubiquitin ligase complex, at least composed of CUL3, KLHL21 and RBX1.

Its subcellular location is the cytoplasm. It localises to the cytoskeleton. It is found in the spindle. Its pathway is protein modification; protein ubiquitination. Substrate-specific adapter of a BCR (BTB-CUL3-RBX1) E3 ubiquitin-protein ligase complex required for efficient chromosome alignment and cytokinesis. The BCR(KLHL21) E3 ubiquitin ligase complex regulates localization of the chromosomal passenger complex (CPC) from chromosomes to the spindle midzone in anaphase and mediates the ubiquitination of AURKB. Ubiquitination of AURKB by BCR(KLHL21) E3 ubiquitin ligase complex may not lead to its degradation by the proteasome. This chain is Kelch-like protein 21 (KLHL21), found in Bos taurus (Bovine).